Reading from the N-terminus, the 398-residue chain is MSQNVYIVSTARTPIGSFQGSLSSKTAVELGAVALKGALAKVPELDASKDFDEIIFGNVLSANLGQAPARQVALAAGLSNHIVASTVNKVCASAMKAIILGAQSIKCGNADVVVAGGCESMTNAPYYMPAARAGAKFGQTVLVDGVERDGLNDAYDGLAMGVHAEKCARDWDITREQQDNFAIESYQKSQKSQKEGKFDNEIVPVTIKGFRGKPDTQVTKDEEPARLHVEKLRSARTVFQKENGTVTAANASPINDGAAAVILVSEKVLKEKNLKPLAIIKGWGEAAHQPADFTWAPSLAVPKALKHAGIEDINSVDYFEFNEAFSVVGLVNTKILKLDPSKVNVYGGAVALGHPLGCSGARVVVTLLSILQQEGGKIGVAAICNGGGGASSIVIEKI.

At serine 2 the chain carries N-acetylserine. Catalysis depends on cysteine 91, which acts as the Acyl-thioester intermediate. CoA-binding residues include tyrosine 186 and lysine 231. Position 186 (tyrosine 186) interacts with K(+). 3 residues coordinate K(+): alanine 248, alanine 249, and alanine 251. Residue serine 252 coordinates CoA. Valine 350 contributes to the K(+) binding site. Active-site proton acceptor residues include histidine 354 and cysteine 384.

The protein belongs to the thiolase-like superfamily. Thiolase family. As to quaternary structure, homotetramer.

The protein resides in the cytoplasm. Its subcellular location is the cytosol. The enzyme catalyses 2 acetyl-CoA = acetoacetyl-CoA + CoA. It functions in the pathway metabolic intermediate biosynthesis; (R)-mevalonate biosynthesis; (R)-mevalonate from acetyl-CoA: step 1/3. In terms of biological role, acetyl-CoA acetyltransferase; part of the first module of ergosterol biosynthesis pathway that includes the early steps of the pathway, conserved across all eukaryotes, and which results in the formation of mevalonate from acetyl-coenzyme A (acetyl-CoA). ERG10 catalyzes the formation of acetoacetyl-CoA from acetyl-CoA. The first module starts with the action of the cytosolic acetyl-CoA acetyltransferase ERG10 that catalyzes the formation of acetoacetyl-CoA. The hydroxymethylglutaryl-CoA synthase ERG13 then condenses acetyl-CoA with acetoacetyl-CoA to form HMG-CoA. The rate-limiting step of the early module is the reduction to mevalonate by the 3-hydroxy-3-methylglutaryl-coenzyme A (HMG-CoA) reductases HMG1 and HMG2 which are derived from a single ancestral HMGR gene by gene duplication. This is Acetyl-CoA acetyltransferase from Saccharomyces cerevisiae (strain ATCC 204508 / S288c) (Baker's yeast).